A 133-amino-acid polypeptide reads, in one-letter code: Small ribosomal subunit protein uS8 (133 aa).

This sequence belongs to the universal ribosomal protein uS8 family. Part of the 30S ribosomal subunit. Contacts proteins S5 and S12.

One of the primary rRNA binding proteins, it binds directly to 16S rRNA central domain where it helps coordinate assembly of the platform of the 30S subunit. The protein is Small ribosomal subunit protein uS8 of Chloroflexus aggregans (strain MD-66 / DSM 9485).